Consider the following 318-residue polypeptide: Xanthocillin biosynthesis cluster transcription factor xanC (318 aa).

Basic and acidic residues predominate over residues 1 to 27; that stretch reads MHSQTTKDEQSKDDSSNEKQDAIERRR. A disordered region spans residues 1 to 39; it reads MHSQTTKDEQSKDDSSNEKQDAIERRRLQNRLSQRNHRR. A bZIP domain is found at 20-52; sequence QDAIERRRLQNRLSQRNHRRKIRDRIAKLQERV. The tract at residues 25–40 is basic motif; the sequence is RRRLQNRLSQRNHRRK. Positions 41–48 are leucine-zipper; that stretch reads IRDRIAKL. 3 disordered regions span residues 71-107, 123-171, and 269-318; these read PPAA…QRNV, PSSS…FSLD, and GRHC…SMML. Low complexity-rich tracts occupy residues 123–139 and 147–171; these read PSSS…PFDL and STNS…FSLD. The span at 293–318 shows a compositional bias: polar residues; the sequence is APSSTPFCPLHPSQSSSLDNYQSMML.

This sequence belongs to the bZIP family.

The protein localises to the nucleus. In terms of biological role, transcription regulator that specifically up-regulates the gene cluster that mediates the biosynthesis of the isocyanide xanthocillin and its derivatives. In Aspergillus fumigatus (strain ATCC MYA-4609 / CBS 101355 / FGSC A1100 / Af293) (Neosartorya fumigata), this protein is Xanthocillin biosynthesis cluster transcription factor xanC.